We begin with the raw amino-acid sequence, 252 residues long: PF03932 family protein CutC (252 aa).

The protein belongs to the CutC family.

It localises to the cytoplasm. The protein is PF03932 family protein CutC of Serratia proteamaculans (strain 568).